The primary structure comprises 425 residues: Serine--tRNA ligase (425 aa).

233-235 serves as a coordination point for L-serine; sequence TAE. Residue 264–266 participates in ATP binding; the sequence is RRE. Glutamate 287 contributes to the L-serine binding site. 351–354 serves as a coordination point for ATP; that stretch reads EISS. Position 385 (serine 385) interacts with L-serine.

It belongs to the class-II aminoacyl-tRNA synthetase family. Type-1 seryl-tRNA synthetase subfamily. In terms of assembly, homodimer. The tRNA molecule binds across the dimer.

The protein localises to the cytoplasm. It carries out the reaction tRNA(Ser) + L-serine + ATP = L-seryl-tRNA(Ser) + AMP + diphosphate + H(+). The catalysed reaction is tRNA(Sec) + L-serine + ATP = L-seryl-tRNA(Sec) + AMP + diphosphate + H(+). It participates in aminoacyl-tRNA biosynthesis; selenocysteinyl-tRNA(Sec) biosynthesis; L-seryl-tRNA(Sec) from L-serine and tRNA(Sec): step 1/1. In terms of biological role, catalyzes the attachment of serine to tRNA(Ser). Is also able to aminoacylate tRNA(Sec) with serine, to form the misacylated tRNA L-seryl-tRNA(Sec), which will be further converted into selenocysteinyl-tRNA(Sec). This is Serine--tRNA ligase from Prochlorococcus marinus (strain MIT 9515).